A 151-amino-acid polypeptide reads, in one-letter code: ATP synthase subunit b' (151 aa).

A helical membrane pass occupies residues 18-38 (TLPLMALQVVLLTFILNALFF).

It belongs to the ATPase B chain family. F-type ATPases have 2 components, F(1) - the catalytic core - and F(0) - the membrane proton channel. F(1) has five subunits: alpha(3), beta(3), gamma(1), delta(1), epsilon(1). F(0) has four main subunits: a(1), b(1), b'(1) and c(10-14). The alpha and beta chains form an alternating ring which encloses part of the gamma chain. F(1) is attached to F(0) by a central stalk formed by the gamma and epsilon chains, while a peripheral stalk is formed by the delta, b and b' chains.

It is found in the cellular thylakoid membrane. F(1)F(0) ATP synthase produces ATP from ADP in the presence of a proton or sodium gradient. F-type ATPases consist of two structural domains, F(1) containing the extramembraneous catalytic core and F(0) containing the membrane proton channel, linked together by a central stalk and a peripheral stalk. During catalysis, ATP synthesis in the catalytic domain of F(1) is coupled via a rotary mechanism of the central stalk subunits to proton translocation. In terms of biological role, component of the F(0) channel, it forms part of the peripheral stalk, linking F(1) to F(0). The b'-subunit is a diverged and duplicated form of b found in plants and photosynthetic bacteria. The chain is ATP synthase subunit b' from Prochlorococcus marinus (strain MIT 9313).